The chain runs to 398 residues: Ribosomal RNA small subunit methyltransferase B (398 aa).

S-adenosyl-L-methionine contacts are provided by residues 221–227 (CGGAGLK), Asp-242, Asp-268, and Asp-283. Cys-336 functions as the Nucleophile in the catalytic mechanism.

The protein belongs to the class I-like SAM-binding methyltransferase superfamily. RsmB/NOP family.

Its subcellular location is the cytoplasm. It carries out the reaction cytidine(967) in 16S rRNA + S-adenosyl-L-methionine = 5-methylcytidine(967) in 16S rRNA + S-adenosyl-L-homocysteine + H(+). Specifically methylates the cytosine at position 967 (m5C967) of 16S rRNA. This is Ribosomal RNA small subunit methyltransferase B from Thermus thermophilus (strain ATCC 27634 / DSM 579 / HB8).